A 599-amino-acid polypeptide reads, in one-letter code: DNA-directed RNA polymerase III subunit RPC3 (599 aa).

Residues 350 to 375 are disordered; it reads PKKRSASNGDDERPTKKIKTEDSDDI. A compositionally biased stretch (basic and acidic residues) spans 359-370; that stretch reads DDERPTKKIKTE. Residues 528–549 are leucine-zipper; sequence LIFSMAEILSNIQAFREDHKIL.

The protein belongs to the RNA polymerase beta chain family. As to quaternary structure, component of the RNA polymerase III (Pol III) complex consisting of 17 subunits.

The protein resides in the nucleus. Its function is as follows. DNA-dependent RNA polymerase catalyzes the transcription of DNA into RNA using the four ribonucleoside triphosphates as substrates. Specific core component of RNA polymerase III which synthesizes small RNAs, such as 5S rRNA and tRNAs. The sequence is that of DNA-directed RNA polymerase III subunit RPC3 (RPC82) from Scheffersomyces stipitis (strain ATCC 58785 / CBS 6054 / NBRC 10063 / NRRL Y-11545) (Yeast).